The chain runs to 519 residues: 2-isopropylmalate synthase (519 aa).

In terms of domain architecture, Pyruvate carboxyltransferase spans 12–274 (VVIFDTTLRD…WCNVESTMLT (263 aa)). Positions 21, 209, 211, and 245 each coordinate Mn(2+). The interval 398-519 (KLSSLTVIAG…QRDVPAAAAS (122 aa)) is regulatory domain.

Belongs to the alpha-IPM synthase/homocitrate synthase family. LeuA type 1 subfamily. In terms of assembly, homodimer. The cofactor is Mn(2+).

The protein localises to the cytoplasm. The enzyme catalyses 3-methyl-2-oxobutanoate + acetyl-CoA + H2O = (2S)-2-isopropylmalate + CoA + H(+). It participates in amino-acid biosynthesis; L-leucine biosynthesis; L-leucine from 3-methyl-2-oxobutanoate: step 1/4. Its function is as follows. Catalyzes the condensation of the acetyl group of acetyl-CoA with 3-methyl-2-oxobutanoate (2-ketoisovalerate) to form 3-carboxy-3-hydroxy-4-methylpentanoate (2-isopropylmalate). This chain is 2-isopropylmalate synthase, found in Nitrobacter winogradskyi (strain ATCC 25391 / DSM 10237 / CIP 104748 / NCIMB 11846 / Nb-255).